A 138-amino-acid polypeptide reads, in one-letter code: Small ribosomal subunit protein uS11c (138 aa).

Residues 1-22 (MAKSIPKTGSRKNVRIGSRNQT) are disordered.

Belongs to the universal ribosomal protein uS11 family. In terms of assembly, part of the 30S ribosomal subunit.

Its subcellular location is the plastid. It is found in the chloroplast. In Phaseolus angularis (Azuki bean), this protein is Small ribosomal subunit protein uS11c.